A 413-amino-acid polypeptide reads, in one-letter code: Probable aminotransferase sirI (413 aa).

Residue K255 is modified to N6-(pyridoxal phosphate)lysine.

The protein belongs to the class-I pyridoxal-phosphate-dependent aminotransferase family. Requires pyridoxal 5'-phosphate as cofactor.

Its pathway is mycotoxin biosynthesis. In terms of biological role, probable aminotransferase; part of the gene cluster that mediates the biosynthesis of sirodesmin PL, an epipolythiodioxopiperazine (ETP) characterized by a disulfide bridged cyclic dipeptide and that acts as a phytotoxin which is involved in the blackleg didease of canola. SirD catalyzes the O-prenylation of L-tyrosine (L-Tyr) in the presence of dimethylallyl diphosphate (DMAPP) to yield 4-O-dimethylallyl-L-Tyr, and therefore represents probably the first pathway-specific enzyme in the biosynthesis of sirodesmin PL. 4-O-dimethylallyl-L-Tyr, then undergoes condensation with L-Ser in a reaction catalyzed by the non-ribosomal peptide synthase sirP to form the diketopiperazine (DKP) backbone. Further bishydroxylation of the DKP performed by the cytochrome P450 monooxygenase sirC leads to the production of the intermediate phomamide. This step is essential to form the reactive thiol group required for toxicity of sirodesmin PL. The next steps of sirodesmin biosynthesis are not well understood yet, but some predictions could be made from intermediate compounds identification. Phomamide is converted into phomalizarine via oxidation, probably by sirT. Further oxidation, methylation (by sirM or sirN) and reduction steps convert phomalizarine to deacetyl sirodesmin. Finally, acetyltransferase sirH probably acetylates deacetyl sirodesmin to produce sirodesmin PL. The polypeptide is Probable aminotransferase sirI (Leptosphaeria maculans (Blackleg fungus)).